Consider the following 1412-residue polypeptide: DNA-directed RNA polymerase subunit beta' (1412 aa).

Zn(2+)-binding residues include cysteine 70, cysteine 72, cysteine 85, and cysteine 88. Aspartate 460, aspartate 462, and aspartate 464 together coordinate Mg(2+). Residues cysteine 819, cysteine 893, cysteine 900, and cysteine 903 each coordinate Zn(2+). Positions 1391–1412 (AEESFEFGTPETPAAEQQHSGE) are disordered.

Belongs to the RNA polymerase beta' chain family. The RNAP catalytic core consists of 2 alpha, 1 beta, 1 beta' and 1 omega subunit. When a sigma factor is associated with the core the holoenzyme is formed, which can initiate transcription. It depends on Mg(2+) as a cofactor. The cofactor is Zn(2+).

It carries out the reaction RNA(n) + a ribonucleoside 5'-triphosphate = RNA(n+1) + diphosphate. In terms of biological role, DNA-dependent RNA polymerase catalyzes the transcription of DNA into RNA using the four ribonucleoside triphosphates as substrates. The protein is DNA-directed RNA polymerase subunit beta' of Paraburkholderia xenovorans (strain LB400).